We begin with the raw amino-acid sequence, 320 residues long: Ribosomal RNA small subunit methyltransferase H (320 aa).

Residues 42–44 (GGH), aspartate 62, phenylalanine 86, aspartate 108, and glutamine 115 contribute to the S-adenosyl-L-methionine site.

This sequence belongs to the methyltransferase superfamily. RsmH family.

Its subcellular location is the cytoplasm. It carries out the reaction cytidine(1402) in 16S rRNA + S-adenosyl-L-methionine = N(4)-methylcytidine(1402) in 16S rRNA + S-adenosyl-L-homocysteine + H(+). Specifically methylates the N4 position of cytidine in position 1402 (C1402) of 16S rRNA. The protein is Ribosomal RNA small subunit methyltransferase H of Yersinia enterocolitica serotype O:8 / biotype 1B (strain NCTC 13174 / 8081).